A 1303-amino-acid chain; its full sequence is D-lysergyl-peptide-synthetase subunit 2 (1303 aa).

The adenylation (A) domain stretch occupies residues 256-653; sequence EWCRWTPSAV…CRKSTQVKLR (398 aa). Residues 793 to 869 form the Carrier domain; the sequence is APSNDIEEAF…ELARHTKLVA (77 aa). Residue S830 is modified to O-(pantetheine 4'-phosphoryl)serine. The segment at 905 to 1294 is condensation (C) domain; it reads EDVYPCTPLQ…HAAPRTLIGD (390 aa).

It belongs to the NRP synthetase family.

It participates in alkaloid biosynthesis; ergot alkaloid biosynthesis. Its function is as follows. D-lysergyl-peptide-synthetase subunit 2; part of the gene cluster that mediates the biosynthesis of fungal ergot alkaloid. DmaW catalyzes the first step of ergot alkaloid biosynthesis by condensing dimethylallyl diphosphate (DMAP) and tryptophan to form 4-dimethylallyl-L-tryptophan. The second step is catalyzed by the methyltransferase easF that methylates 4-dimethylallyl-L-tryptophan in the presence of S-adenosyl-L-methionine, resulting in the formation of 4-dimethylallyl-L-abrine. The catalase easC and the FAD-dependent oxidoreductase easE then transform 4-dimethylallyl-L-abrine to chanoclavine-I which is further oxidized by easD in the presence of NAD(+), resulting in the formation of chanoclavine-I aldehyde. Agroclavine dehydrogenase easG then mediates the conversion of chanoclavine-I aldehyde to agroclavine via a non-enzymatic adduct reaction: the substrate is an iminium intermediate that is formed spontaneously from chanoclavine-I aldehyde in the presence of glutathione. The presence of easA is not required to complete this reaction. Further conversion of agroclavine to paspalic acid is a two-step process involving oxidation of agroclavine to elymoclavine and of elymoclavine to paspalic acid, the second step being performed by the elymoclavine oxidase cloA. Paspalic acid is then further converted to D-lysergic acid. Ergopeptines are assembled from D-lysergic acid and three different amino acids by the D-lysergyl-peptide-synthetases composed each of a monomudular and a trimodular nonribosomal peptide synthetase subunit. LpsB and lpsC encode the monomodular subunits responsible for D-lysergic acid activation and incorporation into the ergopeptine backbone. LpsA1 and A2 subunits encode the trimodular nonribosomal peptide synthetase assembling the tripeptide portion of ergopeptines. LpsA1 is responsible for formation of the major ergopeptine, ergotamine, and lpsA2 for alpha-ergocryptine, the minor ergopeptine of the total alkaloid mixture elaborated by C.purpurea. D-lysergyl-tripeptides are assembled by the nonribosomal peptide synthetases and released as N-(D-lysergyl-aminoacyl)-lactams. Cyclolization of the D-lysergyl-tripeptides is performed by the Fe(2+)/2-ketoglutarate-dependent dioxygenase easH which introduces a hydroxyl group into N-(D-lysergyl-aminoacyl)-lactam at alpha-C of the aminoacyl residue followed by spontaneous condensation with the terminal lactam carbonyl group. The chain is D-lysergyl-peptide-synthetase subunit 2 from Claviceps purpurea (strain 20.1) (Ergot fungus).